The chain runs to 697 residues: MSNSQPPRSSSSSQERAEELRRLLNRAAHAYYVLDAPDMEDPVYDQLYRELQDLEHQDSTLVSADSPTQRVGGRLADGFRSVSHRISLFSLDNAFNRDELHGWYSRLLKALDRTPAAGSPPPTLPMVGELKIDGNALALSYENGVLVRAATRGDGEQGEEITANVRTISSIPLRLHLEPVPAWVEVRGEAFIPDATFHAINNERLSRDESLFANPRNACAGTLRQLDPSVVAARRLDFFAYTLHLPDEWQERRPLTQWDALQWLGDAGFKVNPNAGLLPDLQAVEQFFDTWDTERRQLDYATDGVVVKLNDLRLQDAAGFTQKAPRWAIALKYPAEEAPSKILRISYQVGRTGVITPVAEFEPVGLAGTSVSRASLHNADRLVELDLHDGDTIVVRKAGEIIPEVVRVLPELRPALAQPLEITKTCPACGSTLVRESNESATRCINSSCPAILRGALRHWVSKGAMDIDGLGSKLIEQLVDRGLVQSIADLYRLDMALLGSLERMGSKSAENLIQALNASRSQGWAKQLYGLGIHHVGDVNAKAITTAFPNADSLNQAACHAPESITAIFGVGKEIAQSLQQWFSSPANQRLLDELRSLGFSLSLNEEEQSRATTAAANHHLTGSTFVLTGTLPTLTRSQAKEQIEACGGKVSGSVSKKTSYLVAGEEAGSKLTKAQELGVSILDEEALQNMLRGST.

NAD(+)-binding positions include 41–45 (DPVYD), 90–91 (SL), and Glu129. Lys131 functions as the N6-AMP-lysine intermediate in the catalytic mechanism. NAD(+) is bound by residues Arg152, Glu189, Lys308, and Lys332. Residues Cys426, Cys429, Cys444, and Cys449 each contribute to the Zn(2+) site. In terms of domain architecture, BRCT spans 617–697 (AANHHLTGST…ALQNMLRGST (81 aa)).

The protein belongs to the NAD-dependent DNA ligase family. LigA subfamily. Mg(2+) is required as a cofactor. The cofactor is Mn(2+).

The catalysed reaction is NAD(+) + (deoxyribonucleotide)n-3'-hydroxyl + 5'-phospho-(deoxyribonucleotide)m = (deoxyribonucleotide)n+m + AMP + beta-nicotinamide D-nucleotide.. In terms of biological role, DNA ligase that catalyzes the formation of phosphodiester linkages between 5'-phosphoryl and 3'-hydroxyl groups in double-stranded DNA using NAD as a coenzyme and as the energy source for the reaction. It is essential for DNA replication and repair of damaged DNA. In Synechococcus sp. (strain CC9311), this protein is DNA ligase.